The primary structure comprises 673 residues: Pesticin receptor (673 aa).

A signal peptide spans 1 to 22 (MKMTRLYPLALGGLLLPAIANA). The short motif at 30-37 (STLVVTAS) is the TonB box element. The 115-residue stretch at 41 to 155 (SRSASANNVS…QGGIINIVTQ (115 aa)) folds into the TBDR plug domain. Positions 160–672 (TPRGYIEGGV…TVGINTRIDF (513 aa)) constitute a TBDR beta-barrel domain. The short motif at 657-673 (QVNMGRTVGINTRIDFF) is the TonB C-terminal box element.

The protein belongs to the TonB-dependent receptor family.

Its subcellular location is the cell outer membrane. Its function is as follows. Receptor for the bacteriocin pesticin and for the siderophore yersiniabactin. The polypeptide is Pesticin receptor (fyuA) (Yersinia pestis).